The primary structure comprises 80 residues: Exodeoxyribonuclease 7 small subunit (80 aa).

This sequence belongs to the XseB family. As to quaternary structure, heterooligomer composed of large and small subunits.

The protein localises to the cytoplasm. The enzyme catalyses Exonucleolytic cleavage in either 5'- to 3'- or 3'- to 5'-direction to yield nucleoside 5'-phosphates.. Functionally, bidirectionally degrades single-stranded DNA into large acid-insoluble oligonucleotides, which are then degraded further into small acid-soluble oligonucleotides. In Marinomonas sp. (strain MWYL1), this protein is Exodeoxyribonuclease 7 small subunit.